Reading from the N-terminus, the 159-residue chain is U1 small nuclear ribonucleoprotein C (159 aa).

The Matrin-type zinc finger occupies 4–36; the sequence is FYCDYCDTYLTHDSPSVRKTHCSGRKHKENVKD. Residues 61 to 99 form a disordered region; sequence KIPPTPFPGAPPPGGSLLPHPSIGGPPRPGMLPAPPMGG. Composition is skewed to pro residues over residues 63-74 and 84-99; these read PPTPFPGAPPPG and GGPP…PMGG.

Belongs to the U1 small nuclear ribonucleoprotein C family. Component of the U1 snRNP. The U1 snRNP is composed of the U1 snRNA and the 7 core Sm proteins snrpb, snrpd1, snrpd2, snrpd3, snrpe, snrpf and snrpg that assemble in a heptameric protein ring on the Sm site of the small nuclear RNA to form the core snRNP, and at least 3 U1 snRNP-specific proteins snrnp70/U1-70K, snrpa/U1-A and snrpc/U1-C. snrpc/U1-C interacts with U1 snRNA and the 5' splice-site region of the pre-mRNA.

The protein resides in the nucleus. In terms of biological role, component of the spliceosomal U1 snRNP, which is essential for recognition of the pre-mRNA 5' splice-site and the subsequent assembly of the spliceosome. snrpc/U1-C is directly involved in initial 5' splice-site recognition for both constitutive and regulated alternative splicing. The interaction with the 5' splice-site seems to precede base-pairing between the pre-mRNA and the U1 snRNA. Stimulates commitment or early (E) complex formation by stabilizing the base pairing of the 5' end of the U1 snRNA and the 5' splice-site region. In Danio rerio (Zebrafish), this protein is U1 small nuclear ribonucleoprotein C.